The primary structure comprises 324 residues: uncharacterized protein (324 aa).

Over residues 1–11 the composition is skewed to polar residues; that stretch reads MNTNINVNGSN. Disordered stretches follow at residues 1 to 77, 132 to 194, and 272 to 324; these read MNTN…YSYS, NNHY…NNNN, and DENI…DNDS. The span at 21-64 shows a compositional bias: low complexity; that stretch reads NENNNNNNGRNNNTNNNNNGRYNNNNNNNNNNNNNNYNLNMNST. Over residues 279–324 the composition is skewed to low complexity; it reads SNNNNNNNNNNNNSYNVNICRNNSNFNVNENNGGDNNNDNNNDNDS.

This is an uncharacterized protein from Dictyostelium discoideum (Social amoeba).